The sequence spans 99 residues: Plastocyanin (99 aa).

In terms of domain architecture, Plastocyanin-like spans 1–99; the sequence is IEVLLGSDDG…AGMVGKVTVN (99 aa). 4 residues coordinate Cu cation: His37, Cys84, His87, and Met92.

The protein belongs to the plastocyanin family. Cu(2+) is required as a cofactor.

It is found in the plastid. It localises to the chloroplast thylakoid membrane. Its function is as follows. Participates in electron transfer between P700 and the cytochrome b6-f complex in photosystem I. The polypeptide is Plastocyanin (PETE) (Solanum crispum (Chilean potato-tree)).